Here is a 485-residue protein sequence, read N- to C-terminus: E-selectin (485 aa).

Residues methionine 1 to threonine 22 form the signal peptide. The C-type lectin domain maps to tryptophan 23–tyrosine 140. Residues tryptophan 23–proline 430 are Extracellular-facing. Intrachain disulfides connect cysteine 41-cysteine 139, cysteine 112-cysteine 131, cysteine 144-cysteine 155, cysteine 149-cysteine 164, cysteine 166-cysteine 175, cysteine 181-cysteine 224, cysteine 194-cysteine 206, cysteine 210-cysteine 237, cysteine 242-cysteine 286, cysteine 255-cysteine 268, cysteine 272-cysteine 299, cysteine 304-cysteine 349, cysteine 335-cysteine 362, cysteine 367-cysteine 408, and cysteine 394-cysteine 421. 3 N-linked (GlcNAc...) asparagine glycosylation sites follow: asparagine 61, asparagine 79, and asparagine 88. Residues glutamate 102, asparagine 104, and glutamate 110 each contribute to the Ca(2+) site. A carbohydrate-binding positions include glutamate 102–glutamate 110, glutamate 114–arginine 119, and asparagine 127–glutamate 129. Ca(2+)-binding residues include asparagine 127 and aspartate 128. One can recognise an EGF-like domain in the interval lysine 141–glutamate 176. Asparagine 161 carries N-linked (GlcNAc...) asparagine glycosylation. Sushi domains follow at residues valine 179–valine 239, valine 240–alanine 301, valine 302–valine 364, and valine 365–alanine 423. Asparagine 203 carries N-linked (GlcNAc...) asparagine glycosylation. Asparagine 265 is a glycosylation site (N-linked (GlcNAc...) asparagine). N-linked (GlcNAc...) asparagine glycosylation is found at asparagine 312 and asparagine 316. N-linked (GlcNAc...) asparagine glycans are attached at residues asparagine 379 and asparagine 401. The helical transmembrane segment at leucine 431–leucine 453 threads the bilayer. Over lysine 454 to isoleucine 485 the chain is Cytoplasmic. Positions alanine 466–isoleucine 485 are disordered.

Belongs to the selectin/LECAM family. As to quaternary structure, interacts with SELPLG/PSGL1 and PODXL2 through the sialyl Lewis X epitope. SELPLG sulfation appears not to be required for this interaction.

The protein localises to the cell membrane. Functionally, cell-surface glycoprotein having a role in immunoadhesion. Mediates in the adhesion of blood neutrophils in cytokine-activated endothelium through interaction with SELPLG/PSGL1. May have a role in capillary morphogenesis. The protein is E-selectin (SELE) of Bos taurus (Bovine).